The chain runs to 481 residues: Aromatic amino acid aminotransferase C1773.13 (481 aa).

This sequence belongs to the class-I pyridoxal-phosphate-dependent aminotransferase family. Pyridoxal 5'-phosphate is required as a cofactor.

Its subcellular location is the cytoplasm. It carries out the reaction an aromatic L-alpha-amino acid + 2-oxoglutarate = an aromatic oxo-acid + L-glutamate. In terms of biological role, has aromatic amino acid transaminase activity. In Schizosaccharomyces pombe (strain 972 / ATCC 24843) (Fission yeast), this protein is Aromatic amino acid aminotransferase C1773.13.